Consider the following 134-residue polypeptide: Phospholipase A2 (134 aa).

Ca(2+) contacts are provided by tryptophan 8, glycine 10, and glycine 12. Intrachain disulfides connect cysteine 9-cysteine 31, cysteine 30-cysteine 70, cysteine 37-cysteine 63, cysteine 61-cysteine 95, and cysteine 105-cysteine 113. N-linked (GlcNAc...) asparagine glycosylation occurs at asparagine 13. Residue histidine 34 is part of the active site. Ca(2+) is bound at residue aspartate 35. The active site involves aspartate 64.

Belongs to the phospholipase A2 family. Group III subfamily. Ca(2+) serves as cofactor. As to expression, expressed by the venom gland.

The protein resides in the secreted. The catalysed reaction is a 1,2-diacyl-sn-glycero-3-phosphocholine + H2O = a 1-acyl-sn-glycero-3-phosphocholine + a fatty acid + H(+). Functionally, PLA2 catalyzes the calcium-dependent hydrolysis of the 2-acyl groups in 3-sn-phosphoglycerides. This Apis dorsata (Giant honeybee) protein is Phospholipase A2.